We begin with the raw amino-acid sequence, 312 residues long: F-box protein At1g11270 (312 aa).

The F-box domain occupies 29–80 (SVVKLLLPHDVVGLILERLPVESLLRFKCVSNQWKSTIESQCFQERQLIRRM).

This is F-box protein At1g11270 from Arabidopsis thaliana (Mouse-ear cress).